A 436-amino-acid polypeptide reads, in one-letter code: GTPase Der (436 aa).

2 EngA-type G domains span residues 4 to 167 (PVVA…KDEE) and 176 to 351 (IKLS…ENHK). GTP-binding positions include 10 to 17 (GRPNVGKS), 57 to 61 (DTGGI), 119 to 122 (NKVD), 182 to 189 (GRPNVGKS), 229 to 233 (DTAGM), and 294 to 297 (NKWD). Residues 352 to 436 (KRVQSSTLNE…PIRIIPRKRN (85 aa)) enclose the KH-like domain.

It belongs to the TRAFAC class TrmE-Era-EngA-EngB-Septin-like GTPase superfamily. EngA (Der) GTPase family. As to quaternary structure, associates with the 50S ribosomal subunit.

Functionally, GTPase that plays an essential role in the late steps of ribosome biogenesis. In Staphylococcus carnosus (strain TM300), this protein is GTPase Der.